The sequence spans 338 residues: Ornithine carbamoyltransferase, catabolic (338 aa).

Carbamoyl phosphate-binding positions include 65–68, Q92, R116, and 143–146; these read STRT and HPTQ. Residues N175, D239, and 243-244 each bind L-ornithine; that span reads SM. Carbamoyl phosphate-binding positions include 280–281 and R325; that span reads CL.

Belongs to the aspartate/ornithine carbamoyltransferase superfamily. OTCase family.

The protein localises to the cytoplasm. The catalysed reaction is carbamoyl phosphate + L-ornithine = L-citrulline + phosphate + H(+). It participates in amino-acid degradation; L-arginine degradation via ADI pathway; carbamoyl phosphate from L-arginine: step 2/2. Its function is as follows. Reversibly catalyzes the transfer of the carbamoyl group from carbamoyl phosphate (CP) to the N(epsilon) atom of ornithine (ORN) to produce L-citrulline. The protein is Ornithine carbamoyltransferase, catabolic of Treponema denticola (strain ATCC 35405 / DSM 14222 / CIP 103919 / JCM 8153 / KCTC 15104).